A 466-amino-acid polypeptide reads, in one-letter code: MSSLVLKRFSSTFTAKPIPSKAHHHIPLPSSSFPSGYALTGIHAGVKKQAGVPDLSVILSTSEHPTSAAACFTRNAFKAAPVLVSDEVLKKNGGWAKAVVVNSGCANAVTGKQGMDDAWAMVKATDALLPPSAKFEHQTLVMSTGVIGQNLPISKILSGIRESKETLNSDFSAWERAAQAFMTTDTFPKLRSRVFKINGFEYRMAGMDKGAGMIHPNMGPATTFKPKQLHATLLGCILTDAAVSPKSLQDALTYAVDRSFNSISVDGDMSTNDSIYALANGAAKGPLIDEETDKEAYEVFKKELTDFATDLAQLVVRDGEGATKFVTVTVKGAPSYRDAHNIASRISTSALVKTALYGEDANWGRILAASGSVPLLPSSSTGEPLTIDPTKVSVTFIPSDGTSPLPVLVNGEPEVVDEVRAKEIMTLEDFEIFVNLGMSDDPEGEAKYWTCDFSYEYVRINGDYRS.

Residues 1–9 constitute a mitochondrion transit peptide; the sequence is MSSLVLKRF. Substrate is bound by residues Thr-183, Lys-209, Thr-232, Glu-320, Asn-461, and Ser-466. Thr-232 (nucleophile) is an active-site residue.

Belongs to the ArgJ family. Heterodimer of an alpha and a beta chain. In terms of processing, the alpha and beta chains are autoproteolytically processed from a single precursor protein within the mitochondrion.

The protein localises to the mitochondrion matrix. It catalyses the reaction N(2)-acetyl-L-ornithine + L-glutamate = N-acetyl-L-glutamate + L-ornithine. The catalysed reaction is L-glutamate + acetyl-CoA = N-acetyl-L-glutamate + CoA + H(+). It functions in the pathway amino-acid biosynthesis; L-arginine biosynthesis; L-ornithine and N-acetyl-L-glutamate from L-glutamate and N(2)-acetyl-L-ornithine (cyclic): step 1/1. It participates in amino-acid biosynthesis; L-arginine biosynthesis; N(2)-acetyl-L-ornithine from L-glutamate: step 1/4. In terms of biological role, catalyzes two activities which are involved in the cyclic version of arginine biosynthesis: the synthesis of acetylglutamate from glutamate and acetyl-CoA, and of ornithine by transacetylation between acetylornithine and glutamate. This Laccaria bicolor (strain S238N-H82 / ATCC MYA-4686) (Bicoloured deceiver) protein is Arginine biosynthesis bifunctional protein ArgJ, mitochondrial.